The sequence spans 423 residues: Protein CLP1 homolog (423 aa).

ATP-binding positions include Glu19, Lys60, and Asp122–Thr127.

Belongs to the Clp1 family. Clp1 subfamily.

It localises to the nucleus. Required for endonucleolytic cleavage during polyadenylation-dependent pre-mRNA 3'-end formation. This chain is Protein CLP1 homolog (cbc), found in Anopheles gambiae (African malaria mosquito).